Here is a 430-residue protein sequence, read N- to C-terminus: Functional amyloid transporter FapF (430 aa).

An N-terminal signal peptide occupies residues 1–24 (MHRSLSLRAVVCLSTLLPASLLYA). Over 25-131 (APDVDIETLK…EASGFFGNGK (107 aa)) the chain is Periplasmic. Residues 29 to 64 (DIETLKQELLELKQRYEAQQKALAVLEQRVRQVEDQ) are a coiled coil. The interval 62-114 (EDQPATPAPKRLAKSPADFKQSGSTVAASSGTGGATGGSSYGQSLKDDSEPAQ) is disordered. Gly residues predominate over residues 92 to 101 (GTGGATGGSS). The interval 113 to 125 (AQSVSNLYNEASG) is alpha helical plug. The beta stranded transmembrane segment at 132 to 142 (FSFETGITYAR) threads the bilayer. Topologically, residues 143 to 172 (YDARQLTLNGFLALDSIFLGNINLDRIKAD) are extracellular. Residues 173–183 (NWTLDLTGRYN) form a beta stranded membrane-spanning segment. Over 184-189 (LDNRWQ) the chain is Periplasmic. A beta stranded transmembrane segment spans residues 190 to 198 (FDVNVPVVY). At 199 to 224 (RESTYQSGGASGGDPQATSEESVSRD) the chain is on the extracellular side. Positions 203-223 (YQSGGASGGDPQATSEESVSR) are disordered. The chain crosses the membrane as a beta stranded span at residues 225-238 (PTIGDVNFGIAYKF). Topologically, residues 239-246 (LDESATMP) are periplasmic. The beta stranded transmembrane segment at 247–256 (DAVVSVRVKA) threads the bilayer. Residues 257–288 (PTGKEPFGIKLVRSTANDNLYVPESLPTGNGV) are Extracellular-facing. Residues 289–298 (WSITPGLSLV) form a beta stranded membrane-spanning segment. The Periplasmic segment spans residues 299 to 304 (KTFDPA). Residues 305–314 (VLFGSVSYTH) traverse the membrane as a beta stranded segment. Residues 315–339 (NLEDSFDDISSDVNQKVGGKVRLGD) are Extracellular-facing. Residues 340 to 348 (SFQFGVGVA) traverse the membrane as a beta stranded segment. The Periplasmic segment spans residues 349–356 (FALNERMS). The beta stranded transmembrane segment at 357 to 365 (MSFSVSDLI) threads the bilayer. Residues 366-386 (QRKSKLKPDGGGWQSIVSSDA) are Extracellular-facing. A beta stranded transmembrane segment spans residues 387–397 (NAGYFNVGMTI). Over 398–404 (AASENLT) the chain is Periplasmic. Residues 405–412 (IVPNLAIG) traverse the membrane as a beta stranded segment. The Extracellular segment spans residues 413-419 (MTDDAPD). Residues 420–428 (FTFSLKFPY) traverse the membrane as a beta stranded segment. Residues 429 to 430 (YF) are Periplasmic-facing.

This sequence belongs to the amyloid transporter (TC 9.B.153) family. Homotrimer.

It is found in the cell outer membrane. Its function is as follows. Transports fibril components across the outer membrane. Upon overexpression of the endogenous six-gene locus (fapA-fapF) in situ cells form large clumps during liquid growth, make large amounts of biofilm and produce amyloid fibrils. Expression of the 6 gene operon in E.coli strain BL21(DE3) induces flocculation and biofilm formation with copious extracellular fibrils. The polypeptide is Functional amyloid transporter FapF (Pseudomonas fluorescens).